Here is a 215-residue protein sequence, read N- to C-terminus: Redox-sensing transcriptional repressor Rex (215 aa).

Positions 18 to 57 (LYYRFLKNLHASGKQRVSSAELSDAVKVDSATIRRDFSYF) form a DNA-binding region, H-T-H motif. NAD(+) is bound at residue 92–97 (GVGNLG).

This sequence belongs to the transcriptional regulatory Rex family. In terms of assembly, homodimer.

It localises to the cytoplasm. Modulates transcription in response to changes in cellular NADH/NAD(+) redox state. This Bacillus subtilis (strain 168) protein is Redox-sensing transcriptional repressor Rex.